Here is an 86-residue protein sequence, read N- to C-terminus: Large ribosomal subunit protein uL23 (86 aa).

It belongs to the universal ribosomal protein uL23 family. As to quaternary structure, part of the 50S ribosomal subunit. Contacts protein L29.

Binds to 23S rRNA. One of the proteins that surrounds the polypeptide exit tunnel on the outside of the ribosome. This is Large ribosomal subunit protein uL23 from Aeropyrum pernix (strain ATCC 700893 / DSM 11879 / JCM 9820 / NBRC 100138 / K1).